A 490-amino-acid chain; its full sequence is Betaine aldehyde dehydrogenase (490 aa).

K(+) contacts are provided by Thr26, Ile27, and Asp93. Gly150–Trp152 lines the NAD(+) pocket. The active-site Charge relay system is the Lys162. An NAD(+)-binding site is contributed by Lys176–Glu179. Position 180 (Val180) interacts with K(+). Gly230 to Thr233 provides a ligand contact to NAD(+). Residue Leu246 participates in K(+) binding. Glu252 acts as the Proton acceptor in catalysis. NAD(+)-binding residues include Gly254, Cys286, and Glu387. Cys286 functions as the Nucleophile in the catalytic mechanism. Cys286 bears the Cysteine sulfenic acid (-SOH) mark. K(+)-binding residues include Lys457 and Gly460. Glu464 serves as the catalytic Charge relay system.

This sequence belongs to the aldehyde dehydrogenase family. In terms of assembly, dimer of dimers. K(+) is required as a cofactor.

The enzyme catalyses betaine aldehyde + NAD(+) + H2O = glycine betaine + NADH + 2 H(+). Its pathway is amine and polyamine biosynthesis; betaine biosynthesis via choline pathway; betaine from betaine aldehyde: step 1/1. Involved in the biosynthesis of the osmoprotectant glycine betaine. Catalyzes the irreversible oxidation of betaine aldehyde to the corresponding acid. This is Betaine aldehyde dehydrogenase from Pseudomonas paraeruginosa (strain DSM 24068 / PA7) (Pseudomonas aeruginosa (strain PA7)).